The following is a 283-amino-acid chain: MNFDKFIVIVTGLSGGGKTVTLRTLEDIGFFCVDNLPPPIVLEFLGMLNEYSSFKNIAIGIDIRVQQFLEKATELIKRIKDIYKIEVLFLEADDDTILLRYKETRRPHPLSTHYNDLHKAIKQERELLYPLRCLSDRIIDTSNLNPHELKFLIRSMYGAEKISPSITIISFGYKKGIPANADLIFDARFLPNPYFIPSLTDLNGKDKPVKDFVLKQNETIEFLTYIKNFLSFAVSGYKREGRAYVTIAIGCTGGRHRSVVLVEEIADYLRSLSLNPVVIHRDL.

12–19 (GLSGGGKT) contacts ATP. 62–65 (DIRV) is a GTP binding site.

Belongs to the RapZ-like family.

In terms of biological role, displays ATPase and GTPase activities. In Thermodesulfovibrio yellowstonii (strain ATCC 51303 / DSM 11347 / YP87), this protein is Nucleotide-binding protein THEYE_A0235.